The following is a 638-amino-acid chain: Zona pellucida sperm-binding protein 1 (638 aa).

The first 25 residues, 1–25, serve as a signal peptide directing secretion; it reads MAGGSATTWGYPVALLLLVATLGLG. Residues 26 to 601 are Extracellular-facing; the sequence is RWLQPDPGLP…DSNGNSSLRP (576 aa). Residue asparagine 76 is glycosylated (N-linked (GlcNAc...) asparagine). The span at 165–175 shows a compositional bias: polar residues; that stretch reads LPTSGHTSQGS. A disordered region spans residues 165 to 208; it reads LPTSGHTSQGSGHAFPSPLDPGHSSVHPTPALPSPGPGPTLATL. Positions 234–274 constitute a P-type domain; it reads EQCQVASGHLPCIVRRTSKEACQQAGCCYDNTREVPCYYGN. 3 disulfides stabilise this stretch: cysteine 236-cysteine 261, cysteine 245-cysteine 260, and cysteine 255-cysteine 270. The region spanning 279 to 553 is the ZP domain; it reads QCFRDGYFVL…TACSTGTTRQ (275 aa). N-linked (GlcNAc...) asparagine glycosylation occurs at asparagine 379. A disulfide bond links cysteine 457 and cysteine 478. Residues 549 to 594 form a disordered region; sequence GTTRQRRSSGHRNDTARPQDIVSSPGPVGFEDSYGQEPTLGPTDSN. Residues 554–638 constitute a propeptide, removed in mature form; that stretch reads RRSSGHRNDT…AQKLWESNRQ (85 aa). Residues asparagine 561 and asparagine 596 are each glycosylated (N-linked (GlcNAc...) asparagine). The helical transmembrane segment at 602 to 622 threads the bilayer; that stretch reads LLWAVLLLPAVALVLGFGVFV. Over 623–638 the chain is Cytoplasmic; it reads GLSQTWAQKLWESNRQ.

It belongs to the ZP domain family. ZPB subfamily. As to quaternary structure, polymers of ZP2 and ZP3 organized into long filaments cross-linked by ZP1 homodimers. Interacts with ZP3. Post-translationally, proteolytically cleaved before the transmembrane segment to yield the secreted ectodomain incorporated in the zona pellucida. O-glycosylated. In terms of tissue distribution, expressed in oocytes (at protein level).

The protein localises to the zona pellucida. The protein resides in the cell membrane. Functionally, component of the zona pellucida, an extracellular matrix surrounding oocytes which mediates sperm binding, induction of the acrosome reaction and prevents post-fertilization polyspermy. The zona pellucida is composed of 3 to 4 glycoproteins, ZP1, ZP2, ZP3, and ZP4. ZP1 ensures the structural integrity of the zona pellucida. The polypeptide is Zona pellucida sperm-binding protein 1 (ZP1) (Homo sapiens (Human)).